The sequence spans 543 residues: Phosphatidylinositol/phosphatidylcholine transfer protein SFH12 (543 aa).

One can recognise a CRAL-TRIO domain in the interval glutamate 120–aspartate 294. The disordered stretch occupies residues histidine 316–glutamate 356. Residues aspartate 490–leucine 526 adopt a coiled-coil conformation.

This sequence belongs to the SFH family. Specifically expressed in flowers.

The protein resides in the golgi apparatus membrane. Its subcellular location is the cell membrane. Functionally, required for transport of secretory proteins from the Golgi complex. Catalyzes the transfer of phosphatidylinositol and phosphatidylcholine between membranes in vitro. This is Phosphatidylinositol/phosphatidylcholine transfer protein SFH12 (SFH12) from Arabidopsis thaliana (Mouse-ear cress).